The primary structure comprises 480 residues: Heparin cofactor 2 (480 aa).

The N-terminal stretch at 1-19 (MQHRPHLLLISLTIMSVCG) is a signal peptide. Asn-32 carries N-linked (GlcNAc...) asparagine glycosylation. A run of 2 repeats spans residues 56–66 (GEEDDDYLDLE) and 70–80 (SEDDDYIDIID). A 2 X 11 AA approximate repeats, Asp/Glu-rich (acidic) (hirudin-like) region spans residues 56–80 (GEEDDDYLDLEKLLSEDDDYIDIID). Tyr-62 and Tyr-75 each carry sulfotyrosine. The N-linked (GlcNAc...) asparagine glycan is linked to Asn-169. Residues 173 to 193 (KYEILTIHNLFRKLTHRLFRR) are glycosaminoglycan-binding site. N-linked (GlcNAc...) asparagine glycosylation is found at Asn-368 and Asn-404.

It belongs to the serpin family. Post-translationally, N-glycosylated; different glycan composition appears to lead to two forms of this protein (56 and 60 kDa).

Thrombin inhibitor activated by the glycosaminoglycans, heparin or dermatan sulfate. In the presence of the latter, HC-II becomes the predominant thrombin inhibitor in place of antithrombin III (AT). This chain is Heparin cofactor 2 (SERPIND1), found in Oryctolagus cuniculus (Rabbit).